The chain runs to 208 residues: Claudin-like protein ZF-A89 (208 aa).

A run of 4 helical transmembrane segments spans residues 8-28 (LLAT…CALP), 82-102 (ALVV…IAGG), 117-137 (VVVA…IPVC), and 160-180 (LGAS…GGAL).

Belongs to the claudin family.

Its subcellular location is the cell membrane. The protein localises to the cell junction. It localises to the tight junction. Functionally, component of tight junction (TJ) strands. The protein is Claudin-like protein ZF-A89 (cldnd) of Danio rerio (Zebrafish).